The sequence spans 353 residues: Putrescine N-methyltransferase 2 (353 aa).

The tract at residues 15–50 (KSGAIPMNGHHNGTSKHQNGHKNGTSEQQNGTISLD) is disordered. Positions 25-50 (HNGTSKHQNGHKNGTSEQQNGTISLD) are enriched in polar residues. The region spanning 64–301 (PGWFSEFSAL…GVIGYMLCST (238 aa)) is the PABS domain. S-adenosyl-L-methionine-binding positions include Gln95, Glu170, and 201-202 (DG). The Proton acceptor role is filled by Asp220. An S-adenosyl-L-methionine-binding site is contributed by Tyr289.

Belongs to the class I-like SAM-binding methyltransferase superfamily. Putrescine methyltransferase family. As to expression, predominantly expressed in roots.

It catalyses the reaction putrescine + S-adenosyl-L-methionine = N-methylputrescine + S-adenosyl-L-homocysteine + H(+). It participates in alkaloid biosynthesis; nicotine biosynthesis. In terms of biological role, involved in the biosynthesis of pyridine alkaloid natural products, leading mainly to the production of anabasine, anatabine, nicotine and nornicotine, effective deterrents against herbivores with antiparasitic and pesticide properties (neurotoxins); nornicotine serves as the precursor in the synthesis of the carcinogen compound N'-nitrosonornicotine (NNN). Methyltransferase that mediates the conversion of putrescine to N-methylputrescine. Promotes leaves ripening. The polypeptide is Putrescine N-methyltransferase 2 (Nicotiana tabacum (Common tobacco)).